A 400-amino-acid polypeptide reads, in one-letter code: Multidrug resistance protein 2 (400 aa).

11 consecutive transmembrane segments (helical) span residues 11–31, 46–66, 78–98, 106–126, 142–162, 164–184, 213–233, 253–273, 297–317, 346–366, and 368–388; these read IFII…LIIP, TMGY…PFAG, IILG…GTHV, ILGG…VADI, AIST…GFGI, MPFF…VFIL, IHPV…GLSA, IAAI…LLFG, FVST…FIFL, STYT…LFDL, and IHYP…LTMV.

This sequence belongs to the major facilitator superfamily. TCR/Tet family.

Its subcellular location is the cell membrane. Functionally, energy-dependent efflux pump responsible for decreased drug accumulation in multi-drug-resistant cells. Probably uses a transmembrane proton gradient as the energy source. Causes the efflux of a variety of toxic substances, including such structurally diverse compounds as ethidium bromide, rhodamine and acridine dyes, tetraphenylphosphonium, puromycin, chloramphenicol, doxorubicin, and fluoroquinolone antibiotics. This chain is Multidrug resistance protein 2 (blt), found in Bacillus subtilis (strain 168).